The following is a 263-amino-acid chain: uncharacterized protein (263 aa).

The signal sequence occupies residues M1–G22. C23 carries the N-palmitoyl cysteine lipid modification. C23 is lipidated: S-diacylglycerol cysteine.

Belongs to the staphylococcal tandem lipoprotein family.

Its subcellular location is the cell membrane. This is an uncharacterized protein from Staphylococcus aureus (strain bovine RF122 / ET3-1).